The following is a 69-amino-acid chain: ARECPGKQEWPELVGEYGYKAAAIIERENPNVRSIVKHERSGFTKDFRCDRVWVVVDSTGVVVRTPRVT.

Cysteine 4 and cysteine 49 are joined by a disulfide.

This sequence belongs to the protease inhibitor I13 (potato type I serine protease inhibitor) family.

In terms of biological role, inhibitor of trypsin, chymotrypsin, subtilisin, etc. The sequence is that of Trypsin/subtilisin inhibitor from Amaranthus caudatus (Love-lies-bleeding).